The sequence spans 1222 residues: Chitin synthase 4 (1222 aa).

Disordered stretches follow at residues 1–101 and 138–200; these read MSLP…ERNR and TERT…KRIE. 2 stretches are compositionally biased toward polar residues: residues 11 to 24 and 42 to 77; these read QAYNQRSVYRNSPS and NQASHQRGKSGSSFAESIGINSNTESMPLSPTSPDG. Over residues 182-196 the composition is skewed to basic residues; it reads SGKIKRKSRRHSKPP. Transmembrane regions (helical) follow at residues 205-225 and 243-263; these read PPTFWNVYCAIVTFWAPGFIM and MGLISIILIIMAIVGFLTFGF. Residues Asn378, Asn418, and Asn440 are each glycosylated (N-linked (GlcNAc...) asparagine). Residues 513–533 form a helical membrane-spanning segment; the sequence is ALILSVVGVRFFLAIIFQWFI. Residues 576–630 form a disordered region; the sequence is TVYGSSDRSSKRASFLPTTSRFSSVGGPDIRSQGGRRMPTTMASQSTSNQLLTPN. Residues 616 to 630 show a composition bias toward polar residues; it reads TMASQSTSNQLLTPN. N-linked (GlcNAc...) asparagine glycans are attached at residues Asn637 and Asn1030. Transmembrane regions (helical) follow at residues 1055-1075, 1089-1109, and 1113-1133; these read FIIFVELVGTLVLPAAIAFTF, IIPLVLLGLILGLPGLLVIIT, and WSYIVWMLIYLLALPIWNFVL. A disordered region spans residues 1202–1222; it reads GGQTWTSPPGHQYNEEYYSDA.

This sequence belongs to the chitin synthase family. Class IV subfamily.

It localises to the cell membrane. It carries out the reaction [(1-&gt;4)-N-acetyl-beta-D-glucosaminyl](n) + UDP-N-acetyl-alpha-D-glucosamine = [(1-&gt;4)-N-acetyl-beta-D-glucosaminyl](n+1) + UDP + H(+). Polymerizes chitin, a structural polymer of the cell wall and septum, by transferring the sugar moiety of UDP-GlcNAc to the non-reducing end of the growing chitin polymer. Shows additive effects in septum formation with CHS1, CHS2, CHS3A, CHS5, CHS6 and CHS7. Regulates conidiation. Involved in virulence and mediates mycotoxin deoxinivalenol (DON) biosynthesis via the regulation of the expression of TRI4, TRI5 and TRI6. In Gibberella zeae (strain ATCC MYA-4620 / CBS 123657 / FGSC 9075 / NRRL 31084 / PH-1) (Wheat head blight fungus), this protein is Chitin synthase 4.